The following is a 558-amino-acid chain: Putative cation/proton antiporter YbaL (558 aa).

The Periplasmic portion of the chain corresponds to 1 to 3 (MHH). A helical membrane pass occupies residues 4-24 (ATPLITTIVGGLVLAFILGML). Residues 25-31 (ANKLRIS) are Cytoplasmic-facing. A helical transmembrane segment spans residues 32-52 (PLVGYLLAGVLAGPFTPGFVA). Over 53 to 55 (DTK) the chain is Periplasmic. Residues 56 to 76 (LAPELAELGVILLMFGVGLHF) traverse the membrane as a helical segment. Topologically, residues 77-85 (SLKDLMAVK) are cytoplasmic. The chain crosses the membrane as a helical span at residues 86 to 106 (AIAIPGAIAQIAVATLLGMAL). Over 107–112 (SAVLGW) the chain is Periplasmic. Residues 113-133 (SLMTGIVFGLCLSTASTVVLL) traverse the membrane as a helical segment. The Cytoplasmic segment spans residues 134-148 (RALEERQLIDSQRGQ). The helical transmembrane segment at 149-169 (IAIGWLIVEDLVMVLTLVLLP) threads the bilayer. The Periplasmic segment spans residues 170 to 185 (AVAGMMEQGDVGFATL). Residues 186-206 (AVDMGITIGKVIAFIAIMMLV) traverse the membrane as a helical segment. At 207–225 (GRRLVPWIMARSAATGSRE) the chain is on the cytoplasmic side. A helical membrane pass occupies residues 226 to 246 (LFTLSVLALALGVAFGAVELF). Residue Asp-247 is a topological domain, periplasmic. Residues 248–268 (VSFALGAFFAGMVLNESELSH) traverse the membrane as a helical segment. The Cytoplasmic portion of the chain corresponds to 269-279 (RAAHDTLPLRD). Residues 280–300 (AFAVLFFVSVGMLFDPLILIQ) traverse the membrane as a helical segment. Over 301 to 303 (QPL) the chain is Periplasmic. The helical transmembrane segment at 304–324 (AVLATLAIILFGKSLAAFFLV) threads the bilayer. At 325–336 (RLFGHSQRTALT) the chain is on the cytoplasmic side. Residues 337–357 (IAASLAQIGEFAFILAGLGMA) traverse the membrane as a helical segment. At 358-367 (LNLLPQAGQN) the chain is on the periplasmic side. A helical transmembrane segment spans residues 368-388 (LVLAGAILSIMLNPVLFALLE). The Cytoplasmic segment spans residues 389–558 (KYLAKTETLE…TPPAGEVVTG (170 aa)). An RCK N-terminal domain is found at 417–534 (CNHALLVGYG…TERGANQVVM (118 aa)). Residues 427 to 428 (RV), 447 to 448 (ET), 467 to 468 (NA), Glu-494, and Arg-514 each bind AMP.

The protein belongs to the monovalent cation:proton antiporter 2 (CPA2) transporter (TC 2.A.37) family.

The protein localises to the cell inner membrane. This is Putative cation/proton antiporter YbaL (ybaL) from Escherichia coli (strain K12).